We begin with the raw amino-acid sequence, 611 residues long: Developmental and secondary metabolism regulator veA (611 aa).

3 disordered regions span residues 1 to 57 (MNRK…RPVD), 222 to 497 (RRRE…ASFD), and 511 to 611 (LEAS…PGHA). Over residues 14–23 (KSSATRTTND) the composition is skewed to polar residues. The Velvet domain maps to 24–216 (GRAITYEMQV…AEQGCRVRIR (193 aa)). The short motif at 38–43 (QRARAC) is the Nuclear localization signal element. The span at 242–254 (AARARASATPDPS) shows a compositional bias: low complexity. Residues 274–290 (SASNASHQSLGSISRRP) are compositionally biased toward polar residues. The span at 330–340 (YPPNQFVQQQP) shows a compositional bias: low complexity. The segment covering 341–361 (PMQPPLPQYQPPNYPAPPPPV) has biased composition (pro residues). Residues 362 to 377 (TAAQQPQPAQSYYNYP) are compositionally biased toward low complexity. Positions 419 to 434 (RNSQQIPPTSQPTAYT) are enriched in polar residues. Low complexity-rich tracts occupy residues 435–452 (QPMQPQYAAQMPPAQHYQ) and 461–471 (QASQHSSYSSM). The interval 455–499 (PPPPPSQASQHSSYSSMDLYNSRPAPIEPHHHGNTPASKASFDLP) is PEST. Residues 511-533 (LEASSPTSVAPTNAYFSGGQTPI) are compositionally biased toward polar residues.

Belongs to the velvet family. VeA subfamily. Component of the heterotrimeric velvet complex composed of laeA, veA and velB; VeA acting as a bridging protein between laeA and velB.

The protein resides in the nucleus. It is found in the cytoplasm. Component of the velvet transcription factor complex that controls sexual/asexual developmental ratio in response to light, promoting sexual development in the darkness while stimulating asexual sporulation under illumination. The velvet complex hat acts as a global regulator for secondary metabolite gene expression. Controls the expression of the dothistromin gene cluster. Regulates hyphal growth and pigment formation. Acts as a positive regulator of virulence. The sequence is that of Developmental and secondary metabolism regulator veA from Dothistroma septosporum (strain NZE10 / CBS 128990) (Red band needle blight fungus).